A 238-amino-acid polypeptide reads, in one-letter code: Ribosomal RNA small subunit methyltransferase G (238 aa).

S-adenosyl-L-methionine is bound by residues Gly77, Phe82, 128 to 129 (AE), and Arg147. A disordered region spans residues 219–238 (KETPNKYPRKPGTPNKLPIE).

This sequence belongs to the methyltransferase superfamily. RNA methyltransferase RsmG family.

The protein localises to the cytoplasm. In terms of biological role, specifically methylates the N7 position of guanine in position 535 of 16S rRNA. In Listeria monocytogenes serovar 1/2a (strain ATCC BAA-679 / EGD-e), this protein is Ribosomal RNA small subunit methyltransferase G.